The following is a 282-amino-acid chain: Tyrosine recombinase XerA (282 aa).

The region spanning 2–79 is the Core-binding (CB) domain; the sequence is EAINEVIEEY…ALRSYFRFEG (78 aa). One can recognise a Tyr recombinase domain in the interval 95–271; that stretch reads SLPKSLTREE…TVEHLRKAQE (177 aa). Catalysis depends on residues Arg132, Lys157, His223, Arg226, and His249. The active-site O-(3'-phospho-DNA)-tyrosine intermediate is the Tyr258.

It belongs to the 'phage' integrase family. XerA subfamily.

It localises to the cytoplasm. Its function is as follows. Site-specific tyrosine recombinase, which acts by catalyzing the cutting and rejoining of the recombining DNA molecules. The protein is Tyrosine recombinase XerA of Thermococcus onnurineus (strain NA1).